Reading from the N-terminus, the 299-residue chain is ATP phosphoribosyltransferase (299 aa).

Belongs to the ATP phosphoribosyltransferase family. Long subfamily. As to quaternary structure, equilibrium between an active dimeric form, an inactive hexameric form and higher aggregates. Interconversion between the various forms is largely reversible and is influenced by the natural substrates and inhibitors of the enzyme. The cofactor is Mg(2+).

The protein localises to the cytoplasm. It carries out the reaction 1-(5-phospho-beta-D-ribosyl)-ATP + diphosphate = 5-phospho-alpha-D-ribose 1-diphosphate + ATP. Its pathway is amino-acid biosynthesis; L-histidine biosynthesis; L-histidine from 5-phospho-alpha-D-ribose 1-diphosphate: step 1/9. Feedback inhibited by histidine. Its function is as follows. Catalyzes the condensation of ATP and 5-phosphoribose 1-diphosphate to form N'-(5'-phosphoribosyl)-ATP (PR-ATP). Has a crucial role in the pathway because the rate of histidine biosynthesis seems to be controlled primarily by regulation of HisG enzymatic activity. The chain is ATP phosphoribosyltransferase from Klebsiella pneumoniae (strain 342).